A 202-amino-acid polypeptide reads, in one-letter code: Imidazoleglycerol-phosphate dehydratase (202 aa).

Belongs to the imidazoleglycerol-phosphate dehydratase family.

The protein resides in the cytoplasm. It catalyses the reaction D-erythro-1-(imidazol-4-yl)glycerol 3-phosphate = 3-(imidazol-4-yl)-2-oxopropyl phosphate + H2O. It functions in the pathway amino-acid biosynthesis; L-histidine biosynthesis; L-histidine from 5-phospho-alpha-D-ribose 1-diphosphate: step 6/9. The chain is Imidazoleglycerol-phosphate dehydratase from Acinetobacter baylyi (strain ATCC 33305 / BD413 / ADP1).